We begin with the raw amino-acid sequence, 373 residues long: Cyclin-A3-1 (373 aa).

The segment at 50–80 (AVVLKPQPAPRGGKRAASHAAEPKKPAPPPA) is disordered.

It belongs to the cyclin family. Cyclin AB subfamily.

This is Cyclin-A3-1 (CYCA3-1) from Oryza sativa subsp. japonica (Rice).